Here is a 250-residue protein sequence, read N- to C-terminus: Testis-expressed protein 101 (250 aa).

A signal peptide spans 1 to 25 (MGACRIQYVLLIFLLIASRWTLVQN). N-linked (GlcNAc...) asparagine glycosylation is found at Asn-45, Asn-110, Asn-134, and Asn-160. A UPAR/Ly6 domain is found at 141–215 (CPTCVALGSC…VKETCSYQSF (75 aa)). Residue Gly-224 is the site of GPI-anchor amidated glycine attachment. Residues 225–250 (ASQMPTSLWVLELLFPLLLLPLTHFP) constitute a propeptide, removed in mature form.

In terms of assembly, interacts with VAMP3. Interacts with LY6K. Interacts with DPEP3; co-localized on the cell surface of spermatocytes, spermatids, and testicular spermatozoa, co-localized only in cytoplasmic droplets of caput and corpus epididymal sperm. Interacts with ADAM3; co-localized on sperm surface. Interacts with ADAM5. In terms of processing, N-glycosylated; by high mannose and/or biantennary complex and/or certain types of hybrid oligosaccharides; possesses different oligosaccharides chains according to its subcellular localization in the testis. Sheds from membrane raft by ACE and released from the cell surface of epididymal sperm while it passes through the caput epididymis leading to disappearance of TEX101 on spermatozoa; is essential to produce fertile spermatozoa. As to expression, detected in testis and ovary. Expressed in spermatocytes, spermatids and testicular spermatozoa, but not in spermatogonia or interstitial cells. Expressed abundantly in testicular germ cells (TGCs) but mostly disappeared from epididymal spermatozoa.

It is found in the cell membrane. Its subcellular location is the membrane raft. The protein resides in the cytoplasmic vesicle. It localises to the secretory vesicle. The protein localises to the acrosome. It is found in the secreted. Its function is as follows. Plays a role in fertilization by controlling binding of sperm to zona pellucida and migration of spermatozoa into the oviduct probably through molecule adhesion ADAM3. May play a role in signal transduction and promote protein tyrosine phosphorylation. The sequence is that of Testis-expressed protein 101 from Mus musculus (Mouse).